Here is a 434-residue protein sequence, read N- to C-terminus: Transcriptional enhancer factor TEF-3 (434 aa).

Over residues Met-1–Ser-28 the composition is skewed to polar residues. Disordered regions lie at residues Met-1–Val-42 and Gln-188–Gln-215. Residues Asp-36–Glu-112 constitute a DNA-binding region (TEA). Residues Gly-201–Pro-213 show a composition bias toward pro residues.

Interacts with YAP1 and WWTR1/TAZ. In terms of tissue distribution, preferentially expressed in skeletal muscle. Lower levels in pancreas, placenta, and heart.

Its subcellular location is the nucleus. In terms of biological role, transcription factor which plays a key role in the Hippo signaling pathway, a pathway involved in organ size control and tumor suppression by restricting proliferation and promoting apoptosis. The core of this pathway is composed of a kinase cascade wherein MST1/MST2, in complex with its regulatory protein SAV1, phosphorylates and activates LATS1/2 in complex with its regulatory protein MOB1, which in turn phosphorylates and inactivates YAP1 oncoprotein and WWTR1/TAZ. Acts by mediating gene expression of YAP1 and WWTR1/TAZ, thereby regulating cell proliferation, migration and epithelial mesenchymal transition (EMT) induction. Binds specifically and non-cooperatively to the Sph and GT-IIC 'enhansons' (5'-GTGGAATGT-3') and activates transcription. Binds to the M-CAT motif. This chain is Transcriptional enhancer factor TEF-3 (TEAD4), found in Homo sapiens (Human).